The chain runs to 129 residues: Lysozyme C (129 aa).

A C-type lysozyme domain is found at 1–129 (KIYTRCELAA…VSKWIKDCKL (129 aa)). Cystine bridges form between Cys6–Cys127, Cys30–Cys115, Cys64–Cys80, and Cys76–Cys94. Active-site residues include Glu35 and Asp52.

Belongs to the glycosyl hydrolase 22 family. In terms of assembly, monomer.

It is found in the secreted. The catalysed reaction is Hydrolysis of (1-&gt;4)-beta-linkages between N-acetylmuramic acid and N-acetyl-D-glucosamine residues in a peptidoglycan and between N-acetyl-D-glucosamine residues in chitodextrins.. Lysozymes have primarily a bacteriolytic function; those in tissues and body fluids are associated with the monocyte-macrophage system and enhance the activity of immunoagents. The polypeptide is Lysozyme C (LYZ) (Crax fasciolata (Bare-faced curassow)).